Here is a 215-residue protein sequence, read N- to C-terminus: Recombination protein RecR (215 aa).

The C4-type zinc-finger motif lies at 74–89 (CQRCGHLSADPICDIC). In terms of domain architecture, Toprim spans 97–191 (GVICVVADSR…RVTRIAYGLP (95 aa)).

Belongs to the RecR family.

May play a role in DNA repair. It seems to be involved in an RecBC-independent recombinational process of DNA repair. It may act with RecF and RecO. The polypeptide is Recombination protein RecR (Synechococcus sp. (strain RCC307)).